The chain runs to 381 residues: 40-kDa huntingtin-associated protein (381 aa).

Ala-2 carries the post-translational modification N-acetylalanine. The Nuclear localization signal motif lies at 34-36 (KKR). The interval 213–260 (EHGGHPVQQPELPQQLPSVPQPSLPGPQPRPVLGSTLPLPLPPDHAPG) is disordered. Over residues 218-230 (PVQQPELPQQLPS) the composition is skewed to low complexity. The span at 231–242 (VPQPSLPGPQPR) shows a compositional bias: pro residues.

In terms of assembly, interacts with HTT (via C-terminus). Interacts with RAB5A. Found in a complex with F8A1/F8A2/F8A3, HTT and RAB5A; mediates the recruitment of HTT by RAB5A onto early endosomes.

Its subcellular location is the cytoplasm. It localises to the nucleus. The protein localises to the early endosome. It is found in the nuclear body. In terms of biological role, RAB5A effector molecule that is involved in vesicular trafficking of early endosomes. Mediates the recruitment of HTT by RAB5A onto early endosomes. The HTT-F8A1/F8A2/F8A3-RAB5A complex stimulates early endosomal interaction with actin filaments and inhibits interaction with microtubules, leading to the reduction of endosome motility. In Rattus norvegicus (Rat), this protein is 40-kDa huntingtin-associated protein (F8a1).